The following is a 359-amino-acid chain: E3 ubiquitin-protein ligase RNF146 (359 aa).

The RING-type zinc finger occupies 37–75 (CAICLQTCVHPVSLPCKHVFCYLCVKGASWLGKRCALCR). Glycyl lysine isopeptide (Lys-Gly) (interchain with G-Cter in ubiquitin) cross-links involve residues Lys-85 and Lys-95. Residues 92-168 (EELKAASRGN…EHGRRRKIKR (77 aa)) enclose the WWE domain. A glycoprotein is bound by residues Tyr-108, Arg-111, and Trp-115. A Glycyl lysine isopeptide (Lys-Gly) (interchain with G-Cter in ubiquitin) cross-link involves residue Lys-131. A glycoprotein-binding residues include Tyr-145, Gln-154, Arg-164, and Lys-176. Lys-176 participates in a covalent cross-link: Glycyl lysine isopeptide (Lys-Gly) (interchain with G-Cter in ubiquitin). The tract at residues 254–359 (GDNTAERSHR…PDGQCTVTEV (106 aa)) is disordered. Over residues 284–298 (SIEETESDASSDSED) the composition is skewed to acidic residues. Phosphoserine is present on residues Ser-290 and Ser-294. Residues 306-323 (HSLTQQRLLVSNANQTVP) show a composition bias toward polar residues.

As to quaternary structure, can form homooligomers. Interacts with PARsylated AXIN1, AXIN2, BLZF1, CASC3, H1-2, IPO7, LIG3, NCL, PARP1, XRCC1, XRCC5 and XRCC6. Interacts with DDB1, DHX15, IQGAP1, LRPPRC, PARP2, PRKDC, RUVBL2, TNKS1 and TNKS2. Binding often leads to interactor ubiquitination, in the presence of the appropriate E1 and E2 enzymes, and proteasomal degradation. Ubiquitinated; autoubiquitinated. Polyubiquitinated in the presence of UBE2D1, UBE2D2 and UBE2D3. Multimonoubiquitinated in the presence of UBE2E1. Not ubiquitinated in the presence of UBE2H, CDC34, UBE2L3, UBE2L6, nor UBE2C. In the absence of PAR, autoubiquitination occurs on Lys-85, Lys-95 and Lys-176 via 'Lys-11' and 'Lys-48' ubiquitin linkages. In the presence of PAR, Lys-131 and Lys-176 are ubiquitinated via 'Lys-6', 'Lys-33' and 'Lys-48' ubiquitin linkages. Autoubiquitination is enhanced upon PAR-binding. In terms of tissue distribution, ubiquitously expressed. Up-regulated in brains from patients with Alzheimer disease.

The protein resides in the cytoplasm. It localises to the cytosol. Its subcellular location is the nucleus. It catalyses the reaction S-ubiquitinyl-[E2 ubiquitin-conjugating enzyme]-L-cysteine + [acceptor protein]-L-lysine = [E2 ubiquitin-conjugating enzyme]-L-cysteine + N(6)-ubiquitinyl-[acceptor protein]-L-lysine.. It participates in protein modification; protein ubiquitination. Its function is as follows. E3 ubiquitin-protein ligase that specifically binds poly-ADP-ribosylated (PARsylated) proteins and mediates their ubiquitination and subsequent degradation. May regulate many important biological processes, such as cell survival and DNA damage response. Acts as an activator of the Wnt signaling pathway by mediating the ubiquitination of PARsylated AXIN1 and AXIN2, 2 key components of the beta-catenin destruction complex. Acts in cooperation with tankyrase proteins (TNKS and TNKS2), which mediate PARsylation of target proteins AXIN1, AXIN2, BLZF1, CASC3, TNKS and TNKS2. Recognizes and binds tankyrase-dependent PARsylated proteins via its WWE domain and mediates their ubiquitination, leading to their degradation. Different ubiquitin linkage types have been observed: TNKS2 undergoes ubiquitination at 'Lys-48' and 'Lys-63', while AXIN1 is only ubiquitinated at 'Lys-48'. May regulate TNKS and TNKS2 subcellular location, preventing aggregation at a centrosomal location. Neuroprotective protein. Protects the brain against N-methyl-D-aspartate (NMDA) receptor-mediated glutamate excitotoxicity and ischemia, by interfering with PAR-induced cell death, called parthanatos. Prevents nuclear translocation of AIFM1 in a PAR-binding dependent manner. Does not affect PARP1 activation. Protects against cell death induced by DNA damaging agents, such as N-methyl-N-nitro-N-nitrosoguanidine (MNNG) and rescues cells from G1 arrest. Promotes cell survival after gamma-irradiation. Facilitates DNA repair. The protein is E3 ubiquitin-protein ligase RNF146 (RNF146) of Homo sapiens (Human).